Consider the following 206-residue polypeptide: Large ribosomal subunit protein uL4 (206 aa).

The interval 47–79 (GTKGQKNRSAVRGGGAKPWAQKGSGRARAGTSR) is disordered. The segment covering 69–79 (GSGRARAGTSR) has biased composition (low complexity).

It belongs to the universal ribosomal protein uL4 family. In terms of assembly, part of the 50S ribosomal subunit.

Functionally, one of the primary rRNA binding proteins, this protein initially binds near the 5'-end of the 23S rRNA. It is important during the early stages of 50S assembly. It makes multiple contacts with different domains of the 23S rRNA in the assembled 50S subunit and ribosome. Its function is as follows. Forms part of the polypeptide exit tunnel. The protein is Large ribosomal subunit protein uL4 of Hydrogenovibrio crunogenus (strain DSM 25203 / XCL-2) (Thiomicrospira crunogena).